Reading from the N-terminus, the 1407-residue chain is DNA-directed RNA polymerase subunit beta' (1407 aa).

Residues C70, C72, C85, and C88 each coordinate Zn(2+). Mg(2+)-binding residues include D460, D462, and D464. The Zn(2+) site is built by C814, C888, C895, and C898.

It belongs to the RNA polymerase beta' chain family. The RNAP catalytic core consists of 2 alpha, 1 beta, 1 beta' and 1 omega subunit. When a sigma factor is associated with the core the holoenzyme is formed, which can initiate transcription. The cofactor is Mg(2+). It depends on Zn(2+) as a cofactor.

The enzyme catalyses RNA(n) + a ribonucleoside 5'-triphosphate = RNA(n+1) + diphosphate. Functionally, DNA-dependent RNA polymerase catalyzes the transcription of DNA into RNA using the four ribonucleoside triphosphates as substrates. This is DNA-directed RNA polymerase subunit beta' from Buchnera aphidicola subsp. Acyrthosiphon pisum (strain APS) (Acyrthosiphon pisum symbiotic bacterium).